Consider the following 283-residue polypeptide: uncharacterized protein (283 aa).

Solcar repeat units lie at residues 14-95 (QPVW…LKHL), 102-185 (NDHA…SEAV), and 190-274 (GLAL…TLQG). 6 helical membrane-spanning segments follow: residues 20-40 (TLAG…FDVI), 70-90 (GNVV…VAFS), 105-125 (AVNF…SYPL), 157-177 (FFPG…CFFM), 184-204 (AVLS…IAGA), and 249-266 (GLSV…ITML).

This sequence belongs to the mitochondrial carrier (TC 2.A.29) family.

It is found in the mitochondrion inner membrane. This is an uncharacterized protein from Schizosaccharomyces pombe (strain 972 / ATCC 24843) (Fission yeast).